Here is a 615-residue protein sequence, read N- to C-terminus: Translation initiation factor IF-2 (615 aa).

A tr-type G domain is found at 118–285; the sequence is KRPPIVTVMG…AILTLAEINE (168 aa). The G1 stretch occupies residues 127-134; it reads GHVDHGKT. Position 127 to 134 (127 to 134) interacts with GTP; it reads GHVDHGKT. The G2 stretch occupies residues 152-156; sequence GITQH. The segment at 173 to 176 is G3; it reads DTPG. Residues 173-177 and 227-230 each bind GTP; these read DTPGH and NKMD. The segment at 227-230 is G4; it reads NKMD. The segment at 263–265 is G5; sequence SAI.

Belongs to the TRAFAC class translation factor GTPase superfamily. Classic translation factor GTPase family. IF-2 subfamily.

The protein resides in the cytoplasm. Its function is as follows. One of the essential components for the initiation of protein synthesis. Protects formylmethionyl-tRNA from spontaneous hydrolysis and promotes its binding to the 30S ribosomal subunits. Also involved in the hydrolysis of GTP during the formation of the 70S ribosomal complex. The polypeptide is Translation initiation factor IF-2 (Mycoplasmoides gallisepticum (strain R(low / passage 15 / clone 2)) (Mycoplasma gallisepticum)).